Here is a 316-residue protein sequence, read N- to C-terminus: 4-hydroxy-3-methylbut-2-enyl diphosphate reductase (316 aa).

Cys-12 serves as a coordination point for [4Fe-4S] cluster. Positions 43 and 81 each coordinate (2E)-4-hydroxy-3-methylbut-2-enyl diphosphate. Dimethylallyl diphosphate-binding residues include His-43 and His-81. Residues His-43 and His-81 each coordinate isopentenyl diphosphate. Residue Cys-103 participates in [4Fe-4S] cluster binding. A (2E)-4-hydroxy-3-methylbut-2-enyl diphosphate-binding site is contributed by His-131. His-131 contributes to the dimethylallyl diphosphate binding site. An isopentenyl diphosphate-binding site is contributed by His-131. The Proton donor role is filled by Glu-133. (2E)-4-hydroxy-3-methylbut-2-enyl diphosphate is bound at residue Thr-170. Residue Cys-198 participates in [4Fe-4S] cluster binding. 3 residues coordinate (2E)-4-hydroxy-3-methylbut-2-enyl diphosphate: Ser-226, Asn-228, and Ser-271. Residues Ser-226, Asn-228, and Ser-271 each contribute to the dimethylallyl diphosphate site. Residues Ser-226, Asn-228, and Ser-271 each coordinate isopentenyl diphosphate.

Belongs to the IspH family. The cofactor is [4Fe-4S] cluster.

The catalysed reaction is isopentenyl diphosphate + 2 oxidized [2Fe-2S]-[ferredoxin] + H2O = (2E)-4-hydroxy-3-methylbut-2-enyl diphosphate + 2 reduced [2Fe-2S]-[ferredoxin] + 2 H(+). The enzyme catalyses dimethylallyl diphosphate + 2 oxidized [2Fe-2S]-[ferredoxin] + H2O = (2E)-4-hydroxy-3-methylbut-2-enyl diphosphate + 2 reduced [2Fe-2S]-[ferredoxin] + 2 H(+). The protein operates within isoprenoid biosynthesis; dimethylallyl diphosphate biosynthesis; dimethylallyl diphosphate from (2E)-4-hydroxy-3-methylbutenyl diphosphate: step 1/1. It participates in isoprenoid biosynthesis; isopentenyl diphosphate biosynthesis via DXP pathway; isopentenyl diphosphate from 1-deoxy-D-xylulose 5-phosphate: step 6/6. Its function is as follows. Catalyzes the conversion of 1-hydroxy-2-methyl-2-(E)-butenyl 4-diphosphate (HMBPP) into a mixture of isopentenyl diphosphate (IPP) and dimethylallyl diphosphate (DMAPP). Acts in the terminal step of the DOXP/MEP pathway for isoprenoid precursor biosynthesis. The protein is 4-hydroxy-3-methylbut-2-enyl diphosphate reductase of Geobacillus kaustophilus (strain HTA426).